Here is a 356-residue protein sequence, read N- to C-terminus: Rhomboid-related protein 1 (356 aa).

7 consecutive transmembrane segments (helical) span residues 107–129 (WCPP…FFYW), 172–194 (YMFL…LVGI), 201–223 (KIWR…QYAI), 227–249 (SLLV…NVIL), 256–275 (LRWI…FGGA), 290–312 (HLAH…YNVV), and 319–341 (IIRY…FVIV). The Nucleophile role is filled by serine 233. The active site involves histidine 293.

This sequence belongs to the peptidase S54 family.

The protein resides in the membrane. It carries out the reaction Cleaves type-1 transmembrane domains using a catalytic dyad composed of serine and histidine that are contributed by different transmembrane domains.. In terms of biological role, serine protease which activates lin-3 isoform a in the proximal vulva precursor cells (VPC) during vulva development to transmit the inductive anchor cell signal to the distal VPCs. This chain is Rhomboid-related protein 1, found in Caenorhabditis elegans.